Here is a 302-residue protein sequence, read N- to C-terminus: Olfactory receptor 51H1 (302 aa).

The Extracellular portion of the chain corresponds to Met-1–Pro-27. N-linked (GlcNAc...) asparagine glycosylation is present at Asn-5. Residues Trp-28 to Leu-48 traverse the membrane as a helical segment. Residues Ala-49–Ser-56 lie on the Cytoplasmic side of the membrane. The chain crosses the membrane as a helical span at residues Leu-57 to Met-77. The Extracellular segment spans residues Ser-78–Met-101. Cys-99 and Cys-191 are oxidised to a cystine. The helical transmembrane segment at Gln-102 to Phe-122 threads the bilayer. The Cytoplasmic portion of the chain corresponds to Asp-123–Asp-141. A helical membrane pass occupies residues Val-142–Pro-162. Residues Phe-163–Ser-198 lie on the Extracellular side of the membrane. Residues Leu-199–Ser-219 form a helical membrane-spanning segment. Over Tyr-220–Thr-239 the chain is Cytoplasmic. A helical membrane pass occupies residues Leu-240–Ala-260. The Extracellular segment spans residues Ala-261–His-276. Residues Met-277 to Val-297 traverse the membrane as a helical segment. The Cytoplasmic portion of the chain corresponds to Lys-298–Ile-302.

This sequence belongs to the G-protein coupled receptor 1 family.

The protein localises to the cell membrane. Its function is as follows. Odorant receptor. In Homo sapiens (Human), this protein is Olfactory receptor 51H1 (OR51H1).